Here is a 169-residue protein sequence, read N- to C-terminus: uncharacterized protein (169 aa).

A helical transmembrane segment spans residues 10-30 (YFVTILIIIIIILIVLLIVFL). The segment at 98-123 (QSKPINKNNQQTKNTPTPLDDRPDLS) is disordered. Residues 100 to 115 (KPINKNNQQTKNTPTP) show a composition bias toward low complexity.

It is found in the membrane. This is an uncharacterized protein from Acanthamoeba polyphaga (Amoeba).